The following is a 209-amino-acid chain: Orotate phosphoribosyltransferase (209 aa).

Residues Arg-96, Lys-100, His-102, and 122 to 130 (EDLISTGGS) each bind 5-phospho-alpha-D-ribose 1-diphosphate. Ser-126 contributes to the orotate binding site.

It belongs to the purine/pyrimidine phosphoribosyltransferase family. PyrE subfamily. Homodimer. The cofactor is Mg(2+).

It carries out the reaction orotidine 5'-phosphate + diphosphate = orotate + 5-phospho-alpha-D-ribose 1-diphosphate. It functions in the pathway pyrimidine metabolism; UMP biosynthesis via de novo pathway; UMP from orotate: step 1/2. Functionally, catalyzes the transfer of a ribosyl phosphate group from 5-phosphoribose 1-diphosphate to orotate, leading to the formation of orotidine monophosphate (OMP). The chain is Orotate phosphoribosyltransferase from Streptococcus thermophilus (strain CNRZ 1066).